The following is a 753-amino-acid chain: Rsm22-cox11 tandem protein 2, mitochondrial (753 aa).

The transit peptide at 1 to 39 (MPILTCRYKILFLYNLRNCFTFQNQRCLIPYGTTTTIRW) directs the protein to the mitochondrion. Residues Cys323, Cys329, Cys342, and Cys430 each coordinate [4Fe-4S] cluster. The helical transmembrane segment at 571–591 (IYYLVAISIFALGLTYAAVPL) threads the bilayer. Residues 592 to 753 (YRLFCSKTGY…TNGNLLTKLN (162 aa)) lie on the Mitochondrial intermembrane side of the membrane.

In the N-terminal section; belongs to the methyltransferase superfamily. Rsm22 family. This sequence in the C-terminal section; belongs to the COX11/CtaG family. In terms of assembly, associates with the mitochondrial ribosome (mitoribosome). Only transiently interacts with the mitoribosome. Post-translationally, specific enzymatic cleavages in vivo by mitochondrial processing peptidase (MPP) yield mature proteins including rsm22-2 and cox11-2.

It localises to the mitochondrion. The protein resides in the mitochondrion inner membrane. Mitochondrial ribosome (mitoribosome) assembly factor. Binds at the interface of the head and body domains of the mitochondrial small ribosomal subunit (mt-SSU), occluding the mRNA channel and preventing compaction of the head domain towards the body. Probable inactive methyltransferase: retains the characteristic folding and ability to bind S-adenosyl-L-methionine, but it probably lost its methyltransferase activity. Its function is as follows. Exerts its effect at some terminal stage of cytochrome c oxidase synthesis, probably by being involved in the insertion of the copper B into subunit I. The sequence is that of Rsm22-cox11 tandem protein 2, mitochondrial (cox1102) from Schizosaccharomyces pombe (strain 972 / ATCC 24843) (Fission yeast).